We begin with the raw amino-acid sequence, 383 residues long: Probable L-aspartate decarboxylase (383 aa).

At lysine 231 the chain carries N6-(pyridoxal phosphate)lysine.

The protein belongs to the group II decarboxylase family. MfnA subfamily. The cofactor is pyridoxal 5'-phosphate.

The enzyme catalyses L-aspartate + H(+) = beta-alanine + CO2. It participates in cofactor biosynthesis; coenzyme A biosynthesis. In terms of biological role, catalyzes the decarboxylation of L-aspartate to produce beta-alanine. This chain is Probable L-aspartate decarboxylase, found in Thermococcus gammatolerans (strain DSM 15229 / JCM 11827 / EJ3).